We begin with the raw amino-acid sequence, 223 residues long: 7-cyano-7-deazaguanine synthase (223 aa).

12-22 is a binding site for ATP; that stretch reads FSGGQDSTTCL. Cysteine 189, cysteine 198, cysteine 201, and cysteine 204 together coordinate Zn(2+).

Belongs to the QueC family. As to quaternary structure, homodimer. Requires Zn(2+) as cofactor.

It carries out the reaction 7-carboxy-7-deazaguanine + NH4(+) + ATP = 7-cyano-7-deazaguanine + ADP + phosphate + H2O + H(+). The protein operates within purine metabolism; 7-cyano-7-deazaguanine biosynthesis. Functionally, catalyzes the ATP-dependent conversion of 7-carboxy-7-deazaguanine (CDG) to 7-cyano-7-deazaguanine (preQ(0)). The polypeptide is 7-cyano-7-deazaguanine synthase (Halalkalibacterium halodurans (strain ATCC BAA-125 / DSM 18197 / FERM 7344 / JCM 9153 / C-125) (Bacillus halodurans)).